Reading from the N-terminus, the 207-residue chain is Cytochrome c biogenesis ATP-binding export protein CcmA (207 aa).

Positions 6-207 (LCAEGLECIR…RGDCRSLNLS (202 aa)) constitute an ABC transporter domain. 38 to 45 (GANGAGKT) contributes to the ATP binding site.

This sequence belongs to the ABC transporter superfamily. CcmA exporter (TC 3.A.1.107) family. As to quaternary structure, the complex is composed of two ATP-binding proteins (CcmA) and two transmembrane proteins (CcmB).

The protein resides in the cell inner membrane. It catalyses the reaction heme b(in) + ATP + H2O = heme b(out) + ADP + phosphate + H(+). Its function is as follows. Part of the ABC transporter complex CcmAB involved in the biogenesis of c-type cytochromes; once thought to export heme, this seems not to be the case, but its exact role is uncertain. Responsible for energy coupling to the transport system. The sequence is that of Cytochrome c biogenesis ATP-binding export protein CcmA from Methylococcus capsulatus (strain ATCC 33009 / NCIMB 11132 / Bath).